A 312-amino-acid polypeptide reads, in one-letter code: Ribosomal RNA small subunit methyltransferase H (312 aa).

Residues 35–37, D55, F79, D100, and Q107 contribute to the S-adenosyl-L-methionine site; that span reads GGH. Positions 279 to 312 are disordered; sequence LVGKSQRPGPGEVAANPRSRSAVMRVAERTGGAA.

This sequence belongs to the methyltransferase superfamily. RsmH family.

It is found in the cytoplasm. It catalyses the reaction cytidine(1402) in 16S rRNA + S-adenosyl-L-methionine = N(4)-methylcytidine(1402) in 16S rRNA + S-adenosyl-L-homocysteine + H(+). Its function is as follows. Specifically methylates the N4 position of cytidine in position 1402 (C1402) of 16S rRNA. This is Ribosomal RNA small subunit methyltransferase H from Aromatoleum aromaticum (strain DSM 19018 / LMG 30748 / EbN1) (Azoarcus sp. (strain EbN1)).